We begin with the raw amino-acid sequence, 330 residues long: ADP-L-glycero-D-manno-heptose-6-epimerase (330 aa).

Residues 11–12 (FI), 32–33 (DN), K39, K54, 75–79 (EGACS), and N92 each bind NADP(+). Y139 functions as the Proton acceptor in the catalytic mechanism. K143 is an NADP(+) binding site. N168 is a binding site for substrate. NADP(+) contacts are provided by V169 and K177. The Proton acceptor role is filled by K177. Substrate-binding positions include R179, H186, 200–203 (FGEY), R213, and Y292.

It belongs to the NAD(P)-dependent epimerase/dehydratase family. HldD subfamily. Homopentamer. NADP(+) is required as a cofactor.

The enzyme catalyses ADP-D-glycero-beta-D-manno-heptose = ADP-L-glycero-beta-D-manno-heptose. The protein operates within nucleotide-sugar biosynthesis; ADP-L-glycero-beta-D-manno-heptose biosynthesis; ADP-L-glycero-beta-D-manno-heptose from D-glycero-beta-D-manno-heptose 7-phosphate: step 4/4. Catalyzes the interconversion between ADP-D-glycero-beta-D-manno-heptose and ADP-L-glycero-beta-D-manno-heptose via an epimerization at carbon 6 of the heptose. The sequence is that of ADP-L-glycero-D-manno-heptose-6-epimerase from Burkholderia vietnamiensis (strain G4 / LMG 22486) (Burkholderia cepacia (strain R1808)).